A 130-amino-acid polypeptide reads, in one-letter code: Methylglyoxal synthase (130 aa).

In terms of domain architecture, MGS-like spans 1 to 130 (MSTPRIALIA…DLARRLPVKA (130 aa)). Substrate-binding positions include His-11, Lys-15, 37 to 40 (TGTT), and 57 to 58 (SG). Asp-63 acts as the Proton donor/acceptor in catalysis. Position 90 (His-90) interacts with substrate.

The protein belongs to the methylglyoxal synthase family.

The enzyme catalyses dihydroxyacetone phosphate = methylglyoxal + phosphate. Catalyzes the formation of methylglyoxal from dihydroxyacetone phosphate. The sequence is that of Methylglyoxal synthase from Burkholderia thailandensis (strain ATCC 700388 / DSM 13276 / CCUG 48851 / CIP 106301 / E264).